Here is a 247-residue protein sequence, read N- to C-terminus: Ribosomal RNA processing protein 36 homolog (247 aa).

Disordered stretches follow at residues 1–29, 62–89, 136–188, and 218–247; these read MDNQLSDSSDDESPTDDCSDEGEVEHLKD, RTQGIPDLETKKKKNKGPQELSSKQRVP, SVEK…RELV, and GKLQKYLTKRRKKTASKDRRHVPERRQVDQ. Residues 8 to 23 show a composition bias toward acidic residues; the sequence is SSDDESPTDDCSDEGE. Composition is skewed to basic and acidic residues over residues 136–153 and 164–174; these read SVEKELKKTKNAEKRKNL and ERSRKSAEAKR. Residues 218 to 240 are compositionally biased toward basic residues; sequence GKLQKYLTKRRKKTASKDRRHVP.

It belongs to the RRP36 family.

The protein resides in the nucleus. It localises to the nucleolus. Its function is as follows. Involved in the early processing steps of the pre-rRNA in the maturation pathway leading to the 18S rRNA. This is Ribosomal RNA processing protein 36 homolog from Nematostella vectensis (Starlet sea anemone).